We begin with the raw amino-acid sequence, 195 residues long: uncharacterized protein (195 aa).

The signal sequence occupies residues 1–16 (MIRTIIVFMLLTISFG).

This is an uncharacterized protein from Acanthamoeba polyphaga mimivirus (APMV).